The chain runs to 1292 residues: HMG domain-containing protein 3 (1292 aa).

The HMG box DNA-binding region spans 42 to 110; the sequence is TKKPRSAYLL…GLDPNSKLSA (69 aa). Disordered regions lie at residues 363 to 391, 448 to 505, and 562 to 588; these read SKGS…KLTL, VQPE…GRAR, and KQLG…NRTS. Polar residues predominate over residues 370–391; the sequence is RNQQPVTTEQNSSKENASKLTL. Over residues 467-478 the composition is skewed to low complexity; it reads PTPSEGTSTSSP. Residues 562 to 572 show a composition bias toward polar residues; it reads KQLGQPIQQPS.

It localises to the nucleus. The chain is HMG domain-containing protein 3 from Homo sapiens (Human).